The chain runs to 344 residues: MAP3K12-binding inhibitory protein 1 (344 aa).

Phosphoserine is present on Ser-91. Glycyl lysine isopeptide (Lys-Gly) (interchain with G-Cter in SUMO2) cross-links involve residues Lys-94, Lys-118, Lys-129, Lys-139, Lys-153, and Lys-235. The tract at residues Ala-172–Pro-344 is interaction with MAP3K12. The leucine-zipper 1 stretch occupies residues Ile-271 to Leu-285. Lys-301 carries the N6-acetyllysine; alternate modification. Lys-301 is covalently cross-linked (Glycyl lysine isopeptide (Lys-Gly) (interchain with G-Cter in SUMO2); alternate). Glycyl lysine isopeptide (Lys-Gly) (interchain with G-Cter in SUMO2) cross-links involve residues Lys-304 and Lys-325. A leucine-zipper 2 region spans residues Leu-314–Leu-329.

Component of the ADA2A-containing complex (ATAC), composed of KAT14, KAT2A, TADA2L, TADA3L, ZZ3, MBIP, WDR5, YEATS2, CCDC101 and DR1. In the complex, it probably interacts directly with KAT2A, KAT14 and WDR5. As to expression, ubiquitous. High expression seen in the heart and lung.

The protein localises to the nucleus. It localises to the cytoplasm. Inhibits the MAP3K12 activity to induce the activation of the JNK/SAPK pathway. Component of the ATAC complex, a complex with histone acetyltransferase activity on histones H3 and H4. This is MAP3K12-binding inhibitory protein 1 (MBIP) from Homo sapiens (Human).